Here is a 248-residue protein sequence, read N- to C-terminus: MPPVLILLTLLLPLGAGAEEIIGGHVVKPHSRPYMAFVKSVDIEGNRRYCGGFLVQDDFVLTAAHCRNRTMTVTLGAHNIKAKEETQQIIPVAKAIPHPDYNATAFFSDIMLLKLESKAKRTKAVRPLKLPRPNARVKPGDVCSVAGWGSRSINDTKASARLREAQLVIQEDEECKKRFRHYTETTEICAGDLKKIKTPFKGDSGGPLVCDNKAYGLLAYAKNRTISSGVFTKIVHFLPWISRNMKLL.

The signal sequence occupies residues Met-1–Ala-18. The propeptide occupies Glu-19 to Glu-20. The Peptidase S1 domain occupies Ile-21–Lys-246. Cys-50 and Cys-66 are disulfide-bonded. Residue His-65 is the Charge relay system of the active site. Residues Asn-68 and Asn-102 are each glycosylated (N-linked (GlcNAc...) asparagine). Asp-109 serves as the catalytic Charge relay system. Intrachain disulfides connect Cys-143–Cys-210 and Cys-175–Cys-189. A glycan (N-linked (GlcNAc...) asparagine) is linked at Asn-154. Ser-204 acts as the Charge relay system in catalysis. N-linked (GlcNAc...) asparagine glycosylation is present at Asn-223.

Belongs to the peptidase S1 family. Granzyme subfamily.

The protein resides in the cytolytic granule. Its function is as follows. This enzyme is probably necessary for target cell lysis in cell-mediated immune responses. The polypeptide is Granzyme E (Gzme) (Mus musculus (Mouse)).